A 276-amino-acid chain; its full sequence is MDLWTAAQALILGVVEGLTEFLPISSTGHQIIVADLIDFGGERAMAFNIIIQLGAILAVVWEFRRKILDVVVGLPKQQQAQRFTLNLLIAFMPAVVLGVIFADTIHHYLFNAITVATALVIGGVIMLWAERREHTVRTETVDDMSWSDALKIGLVQCLAMIPGTSRSGSTIIGGLLFGLSRKAATEFSFFLAMPTMVGAAVYSGYKYRDMFRPDDFAVFAIGFVTSFIFAMIAVRGLLKFIATHSYAVFAWYRIAFGLLILATWQFGWIDWASAKA.

6 helical membrane passes run 43–63 (RAMA…VWEF), 85–105 (LNLL…ADTI), 109–129 (LFNA…MLWA), 183–203 (AATE…AVYS), 218–238 (VFAI…RGLL), and 254–274 (IAFG…WASA).

It belongs to the UppP family.

The protein resides in the cell inner membrane. The enzyme catalyses di-trans,octa-cis-undecaprenyl diphosphate + H2O = di-trans,octa-cis-undecaprenyl phosphate + phosphate + H(+). Functionally, catalyzes the dephosphorylation of undecaprenyl diphosphate (UPP). Confers resistance to bacitracin. This Pseudomonas syringae pv. syringae (strain B728a) protein is Undecaprenyl-diphosphatase.